Reading from the N-terminus, the 311-residue chain is Probable manganese-dependent inorganic pyrophosphatase (311 aa).

Mn(2+) contacts are provided by His-9, Asp-13, Asp-15, Asp-77, His-99, and Asp-151.

It belongs to the PPase class C family. The cofactor is Mn(2+).

It localises to the cytoplasm. It catalyses the reaction diphosphate + H2O = 2 phosphate + H(+). In Streptococcus suis (strain 98HAH33), this protein is Probable manganese-dependent inorganic pyrophosphatase.